The sequence spans 575 residues: 3-hydroxy-3-methylglutaryl-coenzyme A reductase 1 (575 aa).

The segment covering 1–13 (MDTTGRLHHRKHA) has biased composition (basic residues). A disordered region spans residues 1-25 (MDTTGRLHHRKHATPVEDRSPTTPK). 2 helical membrane-spanning segments follow: residues 29 to 49 (ALPLPLYLTNAVFFTLFFSVA) and 73 to 93 (EIVAIVSLIASFIYLLGFFGI). Residues 97–160 (QSFIARASHD…PLIAPLVSEE (64 aa)) are linker. Asn-132 is a glycosylation site (N-linked (GlcNAc...) asparagine). Residues 161–575 (DEMIVNSVVD…SSKDMSKAAS (415 aa)) form a catalytic region. Glu-254 acts as the Charge relay system in catalysis. An N-linked (GlcNAc...) asparagine glycan is attached at Asn-318. Active-site charge relay system residues include Lys-386 and Asp-462. Residues 531–551 (LLAAIVAGSVLAGELSLMSAI) form a helical membrane-spanning segment. The Proton donor role is filled by His-560. N-linked (GlcNAc...) asparagine glycosylation is present at Asn-564.

It belongs to the HMG-CoA reductase family.

Its subcellular location is the endoplasmic reticulum membrane. The protein resides in the mitochondrion membrane. It localises to the plastid membrane. It carries out the reaction (R)-mevalonate + 2 NADP(+) + CoA = (3S)-3-hydroxy-3-methylglutaryl-CoA + 2 NADPH + 2 H(+). It participates in metabolic intermediate biosynthesis; (R)-mevalonate biosynthesis; (R)-mevalonate from acetyl-CoA: step 3/3. Functionally, catalyzes the synthesis of mevalonate. The specific precursor of all isoprenoid compounds present in plants. The protein is 3-hydroxy-3-methylglutaryl-coenzyme A reductase 1 (HMGR1) of Hevea brasiliensis (Para rubber tree).